Here is a 69-residue protein sequence, read N- to C-terminus: MGNRTKEDELYREMCRVVGKVVLEMRDLGQEPKHIVIAGVLRTALANKRIQRSELEKQAMETVINALVK.

The protein belongs to the FumD family.

It catalyses the reaction (S)-malate = fumarate + H2O. Functionally, in vitro catalyzes the addition of water to fumarate, forming malate. Cannot catalyze the reverse reaction. Cannot use the cis-isomer maleate as substrate. The chain is Fumarase D from Shigella flexneri.